The following is a 111-amino-acid chain: MSHFSRCFDECSKIERPNVNKKLTRLIIVLFCLLCIIVTLGVIGYKFLFKMSYVDAIYNTAITTSTLGIAPGDKTDAEKIFTGIYAVLVGVFFISVISAIVSYMFTTYILD.

A run of 2 helical transmembrane segments spans residues 27 to 47 (IIVL…GYKF) and 80 to 100 (IFTG…ISAI).

It is found in the membrane. This is an uncharacterized protein from Acanthamoeba polyphaga (Amoeba).